We begin with the raw amino-acid sequence, 137 residues long: Peptide methionine sulfoxide reductase MsrB (137 aa).

The MsrB domain occupies 7–129 (PDHPATELNE…NSASLSFTDG (123 aa)). Zn(2+) is bound by residues cysteine 46, cysteine 49, cysteine 95, and cysteine 98. Cysteine 118 functions as the Nucleophile in the catalytic mechanism.

It belongs to the MsrB Met sulfoxide reductase family. Zn(2+) serves as cofactor.

It carries out the reaction L-methionyl-[protein] + [thioredoxin]-disulfide + H2O = L-methionyl-(R)-S-oxide-[protein] + [thioredoxin]-dithiol. This is Peptide methionine sulfoxide reductase MsrB from Serratia proteamaculans (strain 568).